We begin with the raw amino-acid sequence, 326 residues long: UDP-N-acetylglucosamine transporter (326 aa).

8 helical membrane passes run Asn4–Met24, Leu38–Val58, Leu136–Trp156, Phe174–Phe194, Leu212–Val232, Gln243–Ile263, Ile269–Trp289, and Phe293–Tyr313.

Belongs to the nucleotide-sugar transporter family. SLC35A subfamily. As to quaternary structure, interacts with SLC35A2; the interaction is reduced in the presence of SLC35A4. Found in a complex with SLC35A2 and SLC35A4. Interacts with MGAT4B. Post-translationally, O-Glcnacylation regulates the stability of SLC35A3 and the specific complex formation with MGAT4B.

It is found in the golgi apparatus membrane. The enzyme catalyses UMP(out) + UDP-N-acetyl-alpha-D-glucosamine(in) = UMP(in) + UDP-N-acetyl-alpha-D-glucosamine(out). In terms of biological role, transports diphosphate-N-acetylglucosamine (UDP-GlcNAc) from the cytosol into the lumen of the Golgi apparatus, functioning as an antiporter that exchanges UDP-N-acetyl-alpha-D-glucosamine for UMP. May supply UDP-GlcNAc as substrate for Golgi-resident glycosyltransferases that generate highly branched, multiantennary complex N-glycans and keratan sulfate. However, the exact role of SLC35A3 still needs to be elucidated, it could be a member of a catalytically more efficient multiprotein complex rather than function independently as a single transporter. This Rattus norvegicus (Rat) protein is UDP-N-acetylglucosamine transporter (Slc35a3).